The following is a 148-amino-acid chain: Large ribosomal subunit protein bL9 (148 aa).

Belongs to the bacterial ribosomal protein bL9 family.

Functionally, binds to the 23S rRNA. This is Large ribosomal subunit protein bL9 from Sulfurimonas denitrificans (strain ATCC 33889 / DSM 1251) (Thiomicrospira denitrificans (strain ATCC 33889 / DSM 1251)).